Reading from the N-terminus, the 938-residue chain is Isoleucine--tRNA ligase (938 aa).

Positions 61–71 (PYANGDIHLGT) match the 'HIGH' region motif. Residue Glu559 participates in L-isoleucyl-5'-AMP binding. The 'KMSKS' region signature appears at 601 to 605 (KMSKS). Lys604 provides a ligand contact to ATP. Zn(2+) is bound by residues Cys904, Cys907, Cys923, and Cys926.

This sequence belongs to the class-I aminoacyl-tRNA synthetase family. IleS type 1 subfamily. As to quaternary structure, monomer. Zn(2+) is required as a cofactor.

The protein localises to the cytoplasm. The enzyme catalyses tRNA(Ile) + L-isoleucine + ATP = L-isoleucyl-tRNA(Ile) + AMP + diphosphate. Catalyzes the attachment of isoleucine to tRNA(Ile). As IleRS can inadvertently accommodate and process structurally similar amino acids such as valine, to avoid such errors it has two additional distinct tRNA(Ile)-dependent editing activities. One activity is designated as 'pretransfer' editing and involves the hydrolysis of activated Val-AMP. The other activity is designated 'posttransfer' editing and involves deacylation of mischarged Val-tRNA(Ile). This is Isoleucine--tRNA ligase from Symbiobacterium thermophilum (strain DSM 24528 / JCM 14929 / IAM 14863 / T).